Reading from the N-terminus, the 136-residue chain is Large ribosomal subunit protein uL16 (136 aa).

This sequence belongs to the universal ribosomal protein uL16 family. In terms of assembly, part of the 50S ribosomal subunit.

In terms of biological role, binds 23S rRNA and is also seen to make contacts with the A and possibly P site tRNAs. The protein is Large ribosomal subunit protein uL16 of Rickettsia akari (strain Hartford).